The sequence spans 448 residues: Glucose-6-phosphate isomerase (448 aa).

The Proton donor role is filled by Glu290. Active-site residues include His311 and Lys425.

This sequence belongs to the GPI family.

It is found in the cytoplasm. It carries out the reaction alpha-D-glucose 6-phosphate = beta-D-fructose 6-phosphate. It functions in the pathway carbohydrate biosynthesis; gluconeogenesis. Its pathway is carbohydrate degradation; glycolysis; D-glyceraldehyde 3-phosphate and glycerone phosphate from D-glucose: step 2/4. Its function is as follows. Catalyzes the reversible isomerization of glucose-6-phosphate to fructose-6-phosphate. In Latilactobacillus sakei subsp. sakei (strain 23K) (Lactobacillus sakei subsp. sakei), this protein is Glucose-6-phosphate isomerase.